We begin with the raw amino-acid sequence, 373 residues long: ATP synthase gamma chain 1, chloroplastic (373 aa).

A chloroplast-targeting transit peptide spans 1–50; that stretch reads MACSNLTTMWVSSKPSLSADSSSLSFRSVLKCPTNTSSPPSRASSVSPLQ. Residue Cys-139 is part of the active site. An intrachain disulfide couples Cys-249 to Cys-255. The residue at position 347 (Ser-347) is a Phosphoserine.

Belongs to the ATPase gamma chain family. F-type ATPases have 2 components, CF(1) - the catalytic core - and CF(0) - the membrane proton channel. CF(1) has five subunits: alpha(3), beta(3), gamma(1), delta(1), epsilon(1). CF(0) has four main subunits: a, b, b' and c. Interacts with PAB.

It is found in the plastid. The protein localises to the chloroplast thylakoid membrane. Produces ATP from ADP in the presence of a proton gradient across the membrane. The gamma chain is believed to be important in regulating ATPase activity and the flow of protons through the CF(0) complex. The polypeptide is ATP synthase gamma chain 1, chloroplastic (ATPC1) (Arabidopsis thaliana (Mouse-ear cress)).